Here is a 1374-residue protein sequence, read N- to C-terminus: Sterol 3-beta-glucosyltransferase (1374 aa).

Positions Met1–Arg14 are enriched in basic and acidic residues. 3 disordered regions span residues Met1–Asn60, Ala83–Ala190, and Thr206–Ser227. A compositionally biased stretch (polar residues) spans Leu16–Pro28. Positions Phe29–Asp41 are enriched in basic and acidic residues. A compositionally biased stretch (polar residues) spans Val101–Thr112. Residues Lys125–Gly138 are compositionally biased toward basic and acidic residues. Positions Met234 to Ser283 constitute a GRAM 1 domain. The 98-residue stretch at Val285–Phe382 folds into the PH domain. Residues Ala458 to Ser538 form a disordered region. 2 stretches are compositionally biased toward basic and acidic residues: residues Glu461–Glu473 and Ser490–Arg499. Residues Ser503–Ser538 are compositionally biased toward polar residues. Positions Asp704–Lys770 constitute a GRAM 2 domain. The UDP-alpha-D-glucose site is built by Ser893, Arg894, Asp896, Ala1196, His1198, His1211, Gly1215, Thr1216, Asp1235, and Gln1236. Residues Ala1314–Ala1325 show a composition bias toward polar residues. Positions Ala1314–Asp1338 are disordered.

This sequence belongs to the glycosyltransferase 28 family.

The protein resides in the cytoplasm. The protein localises to the preautophagosomal structure membrane. The catalysed reaction is a sterol + UDP-alpha-D-glucose = a sterol 3-beta-D-glucoside + UDP + H(+). The enzyme catalyses ergosterol + UDP-alpha-D-glucose = ergosteryl 3-beta-D-glucoside + UDP + H(+). In terms of biological role, sterol glycosyltransferase responsible for the glycosylation of ergosterol to form ergosterol-glucoside. The sequence is that of Sterol 3-beta-glucosyltransferase from Penicillium rubens (strain ATCC 28089 / DSM 1075 / NRRL 1951 / Wisconsin 54-1255) (Penicillium chrysogenum).